A 455-amino-acid chain; its full sequence is Anaerobic glycerol-3-phosphate dehydrogenase subunit B (455 aa).

This sequence belongs to the anaerobic G-3-P dehydrogenase subunit B family. In terms of assembly, composed of a catalytic GlpA/B dimer and of membrane bound GlpC. FMN serves as cofactor.

It carries out the reaction a quinone + sn-glycerol 3-phosphate = dihydroxyacetone phosphate + a quinol. It functions in the pathway polyol metabolism; glycerol degradation via glycerol kinase pathway; glycerone phosphate from sn-glycerol 3-phosphate (anaerobic route): step 1/1. In terms of biological role, conversion of glycerol 3-phosphate to dihydroxyacetone. Uses fumarate or nitrate as electron acceptor. This Aliivibrio fischeri (strain ATCC 700601 / ES114) (Vibrio fischeri) protein is Anaerobic glycerol-3-phosphate dehydrogenase subunit B.